A 559-amino-acid polypeptide reads, in one-letter code: GTP diphosphokinase CRSH2, chloroplastic (559 aa).

The transit peptide at 1-37 directs the protein to the chloroplast; sequence MASAGGEVVVVDPAAAAVAPDVEHHAPAPRLTPAGSG. Residues 87–187 enclose the HD domain; the sequence is SLARALIVAA…LELAIRLDAM (101 aa). 2 EF-hand domains span residues 449–484 and 486–518; these read ASAG…LGAG and KDAE…VELK. 10 residues coordinate Ca(2+): Asp462, Asn464, Asp466, Arg468, Glu473, Asp496, Asn498, Asp500, Ser502, and Glu507.

This sequence belongs to the RelA/SpoT family. Expressed in shoots.

Its subcellular location is the plastid. It is found in the chloroplast. The catalysed reaction is GTP + ATP = guanosine 3'-diphosphate 5'-triphosphate + AMP. Its activity is regulated as follows. Activated by calcium. Its function is as follows. Possesses calcium-dependent ppGpp (guanosine 3'-diphosphate 5'-diphosphate) synthetase activity in vitro and is able to functionally complement E.coli relA mutants. May be involved in a rapid plant ppGpp-mediated response to pathogens and other stresses. In Oryza sativa subsp. japonica (Rice), this protein is GTP diphosphokinase CRSH2, chloroplastic.